The chain runs to 282 residues: Mitochondrial outer membrane protein porin (282 aa).

The protein belongs to the eukaryotic mitochondrial porin family.

Its subcellular location is the mitochondrion outer membrane. Forms a channel through the cell membrane that allows diffusion of small hydrophilic molecules. The channel adopts an open conformation at low or zero membrane potential and a closed conformation at potentials above 30-40 mV. The open state has a weak anion selectivity whereas the closed state is cation-selective. The protein is Mitochondrial outer membrane protein porin (POR1) of Candida albicans (strain SC5314 / ATCC MYA-2876) (Yeast).